A 181-amino-acid chain; its full sequence is dTDP-4-dehydrorhamnose 3,5-epimerase (181 aa).

Substrate is bound by residues Arg-23, Glu-28, 47–49, and Arg-59; that span reads QDN. His-62 functions as the Proton acceptor in the catalytic mechanism. Substrate contacts are provided by Lys-71 and His-118. The active-site Proton donor is the Tyr-131. Substrate is bound by residues Glu-142 and Lys-167.

It belongs to the dTDP-4-dehydrorhamnose 3,5-epimerase family. In terms of assembly, homodimer.

It carries out the reaction dTDP-4-dehydro-6-deoxy-alpha-D-glucose = dTDP-4-dehydro-beta-L-rhamnose. It participates in carbohydrate biosynthesis; dTDP-L-rhamnose biosynthesis. Its pathway is bacterial outer membrane biogenesis; lipopolysaccharide biosynthesis. In terms of biological role, catalyzes the epimerization of the C3' and C5'positions of dTDP-6-deoxy-D-xylo-4-hexulose, forming dTDP-6-deoxy-L-lyxo-4-hexulose. This Pseudomonas aeruginosa (strain ATCC 15692 / DSM 22644 / CIP 104116 / JCM 14847 / LMG 12228 / 1C / PRS 101 / PAO1) protein is dTDP-4-dehydrorhamnose 3,5-epimerase (rmlC).